The primary structure comprises 507 residues: ATP synthase subunit alpha, chloroplastic (507 aa).

ATP is bound at residue 170 to 177; sequence GDRQTGKT.

This sequence belongs to the ATPase alpha/beta chains family. As to quaternary structure, F-type ATPases have 2 components, CF(1) - the catalytic core - and CF(0) - the membrane proton channel. CF(1) has five subunits: alpha(3), beta(3), gamma(1), delta(1), epsilon(1). CF(0) has four main subunits: a, b, b' and c.

It is found in the plastid. The protein localises to the chloroplast thylakoid membrane. The catalysed reaction is ATP + H2O + 4 H(+)(in) = ADP + phosphate + 5 H(+)(out). Produces ATP from ADP in the presence of a proton gradient across the membrane. The alpha chain is a regulatory subunit. This Drimys granadensis protein is ATP synthase subunit alpha, chloroplastic.